The following is a 334-amino-acid chain: Beta-hexosaminidase (334 aa).

Substrate is bound by residues Asp62, Arg70, Arg131, and 161 to 162 (KH). The Proton donor/acceptor role is filled by His174. Catalysis depends on Asp246, which acts as the Nucleophile.

It belongs to the glycosyl hydrolase 3 family. NagZ subfamily.

It localises to the cytoplasm. It carries out the reaction Hydrolysis of terminal non-reducing N-acetyl-D-hexosamine residues in N-acetyl-beta-D-hexosaminides.. Its pathway is cell wall biogenesis; peptidoglycan recycling. Plays a role in peptidoglycan recycling by cleaving the terminal beta-1,4-linked N-acetylglucosamine (GlcNAc) from peptide-linked peptidoglycan fragments, giving rise to free GlcNAc, anhydro-N-acetylmuramic acid and anhydro-N-acetylmuramic acid-linked peptides. The chain is Beta-hexosaminidase from Tolumonas auensis (strain DSM 9187 / NBRC 110442 / TA 4).